A 212-amino-acid chain; its full sequence is Uridine kinase (212 aa).

Gly13 to Thr20 contacts ATP.

The protein belongs to the uridine kinase family.

The protein resides in the cytoplasm. It catalyses the reaction uridine + ATP = UMP + ADP + H(+). The catalysed reaction is cytidine + ATP = CMP + ADP + H(+). Its pathway is pyrimidine metabolism; CTP biosynthesis via salvage pathway; CTP from cytidine: step 1/3. It functions in the pathway pyrimidine metabolism; UMP biosynthesis via salvage pathway; UMP from uridine: step 1/1. The sequence is that of Uridine kinase from Bacillus cereus (strain B4264).